Consider the following 147-residue polypeptide: Cyanate hydratase (147 aa).

Residues arginine 88, glutamate 91, and serine 114 contribute to the active site.

It belongs to the cyanase family.

The enzyme catalyses cyanate + hydrogencarbonate + 3 H(+) = NH4(+) + 2 CO2. Functionally, catalyzes the reaction of cyanate with bicarbonate to produce ammonia and carbon dioxide. The sequence is that of Cyanate hydratase from Cupriavidus necator (strain ATCC 17699 / DSM 428 / KCTC 22496 / NCIMB 10442 / H16 / Stanier 337) (Ralstonia eutropha).